The sequence spans 151 residues: Ubiquitin-conjugating enzyme E2 2 (151 aa).

The UBC core domain maps to 4 to 150 (AARRRLMRDF…VRETVEKSWE (147 aa)). Cys88 (glycyl thioester intermediate) is an active-site residue.

The protein belongs to the ubiquitin-conjugating enzyme family.

The protein localises to the cytoplasm. Its subcellular location is the nucleus. The enzyme catalyses S-ubiquitinyl-[E1 ubiquitin-activating enzyme]-L-cysteine + [E2 ubiquitin-conjugating enzyme]-L-cysteine = [E1 ubiquitin-activating enzyme]-L-cysteine + S-ubiquitinyl-[E2 ubiquitin-conjugating enzyme]-L-cysteine.. It functions in the pathway protein modification; protein ubiquitination. Its function is as follows. Catalyzes the covalent attachment of ubiquitin to other proteins. Plays a role in transcription regulation by catalyzing the monoubiquitination of histone H2B to form H2BK123ub1. H2BK123ub1 gives a specific tag for epigenetic transcriptional activation and is also a prerequisite for H3K4me and H3K79me formation. Also involved in postreplication repair of UV-damaged DNA, in N-end rule-dependent protein degradation and in sporulation. In Fusarium solani (Filamentous fungus), this protein is Ubiquitin-conjugating enzyme E2 2 (UBC2).